Reading from the N-terminus, the 303-residue chain is Porphobilinogen deaminase (303 aa).

The residue at position 241 (C241) is an S-(dipyrrolylmethanemethyl)cysteine.

Belongs to the HMBS family. In terms of assembly, monomer. The cofactor is dipyrromethane.

It carries out the reaction 4 porphobilinogen + H2O = hydroxymethylbilane + 4 NH4(+). The protein operates within porphyrin-containing compound metabolism; protoporphyrin-IX biosynthesis; coproporphyrinogen-III from 5-aminolevulinate: step 2/4. Its pathway is porphyrin-containing compound metabolism; chlorophyll biosynthesis. Functionally, tetrapolymerization of the monopyrrole PBG into the hydroxymethylbilane pre-uroporphyrinogen in several discrete steps. The sequence is that of Porphobilinogen deaminase from Roseiflexus sp. (strain RS-1).